We begin with the raw amino-acid sequence, 476 residues long: Aspartyl/glutamyl-tRNA(Asn/Gln) amidotransferase subunit B (476 aa).

The protein belongs to the GatB/GatE family. GatB subfamily. Heterotrimer of A, B and C subunits.

The enzyme catalyses L-glutamyl-tRNA(Gln) + L-glutamine + ATP + H2O = L-glutaminyl-tRNA(Gln) + L-glutamate + ADP + phosphate + H(+). It carries out the reaction L-aspartyl-tRNA(Asn) + L-glutamine + ATP + H2O = L-asparaginyl-tRNA(Asn) + L-glutamate + ADP + phosphate + 2 H(+). Its function is as follows. Allows the formation of correctly charged Asn-tRNA(Asn) or Gln-tRNA(Gln) through the transamidation of misacylated Asp-tRNA(Asn) or Glu-tRNA(Gln) in organisms which lack either or both of asparaginyl-tRNA or glutaminyl-tRNA synthetases. The reaction takes place in the presence of glutamine and ATP through an activated phospho-Asp-tRNA(Asn) or phospho-Glu-tRNA(Gln). This chain is Aspartyl/glutamyl-tRNA(Asn/Gln) amidotransferase subunit B, found in Albidiferax ferrireducens (strain ATCC BAA-621 / DSM 15236 / T118) (Rhodoferax ferrireducens).